The following is a 392-amino-acid chain: S-adenosylmethionine synthase (392 aa).

Histidine 20 is an ATP binding site. Aspartate 22 contacts Mg(2+). Glutamate 48 is a binding site for K(+). The L-methionine site is built by glutamate 61 and glutamine 106. The segment at 106-116 is flexible loop; that stretch reads QSRDIINAIEK. Residues 171-173, aspartate 248, 254-255, alanine 271, and lysine 275 each bind ATP; these read DSK and RK. Aspartate 248 is an L-methionine binding site. Lysine 279 serves as a coordination point for L-methionine.

The protein belongs to the AdoMet synthase family. As to quaternary structure, homotetramer; dimer of dimers. Requires Mg(2+) as cofactor. It depends on K(+) as a cofactor.

The protein localises to the cytoplasm. It carries out the reaction L-methionine + ATP + H2O = S-adenosyl-L-methionine + phosphate + diphosphate. It functions in the pathway amino-acid biosynthesis; S-adenosyl-L-methionine biosynthesis; S-adenosyl-L-methionine from L-methionine: step 1/1. Functionally, catalyzes the formation of S-adenosylmethionine (AdoMet) from methionine and ATP. The overall synthetic reaction is composed of two sequential steps, AdoMet formation and the subsequent tripolyphosphate hydrolysis which occurs prior to release of AdoMet from the enzyme. The protein is S-adenosylmethionine synthase of Borreliella burgdorferi (strain ATCC 35210 / DSM 4680 / CIP 102532 / B31) (Borrelia burgdorferi).